The following is a 215-amino-acid chain: Phosphoserine phosphatase (215 aa).

The Nucleophile role is filled by Asp-11. Positions 11 and 13 each coordinate Mg(2+). The Proton donor role is filled by Asp-13. Residues Glu-20, Arg-56, 99 to 100 (SG), and Lys-144 each bind substrate. Asp-167 lines the Mg(2+) pocket. Asn-170 provides a ligand contact to substrate.

This sequence belongs to the HAD-like hydrolase superfamily. SerB family. It depends on Mg(2+) as a cofactor.

It carries out the reaction O-phospho-L-serine + H2O = L-serine + phosphate. It catalyses the reaction O-phospho-D-serine + H2O = D-serine + phosphate. The protein operates within amino-acid biosynthesis; L-serine biosynthesis; L-serine from 3-phospho-D-glycerate: step 3/3. This Streptococcus thermophilus (strain ATCC BAA-250 / LMG 18311) protein is Phosphoserine phosphatase.